We begin with the raw amino-acid sequence, 21 residues long: Peptidyl-prolyl cis-trans isomerase (21 aa).

Positions 1-21 are disordered; the sequence is ENFKIKHTEPGLLSMANAGKN.

It belongs to the cyclophilin-type PPIase family. PPIase A subfamily.

The enzyme catalyses [protein]-peptidylproline (omega=180) = [protein]-peptidylproline (omega=0). Its function is as follows. PPIases accelerate the folding of proteins. It catalyzes the cis-trans isomerization of proline imidic peptide bonds in oligopeptides. This Naegleria fowleri (Brain eating amoeba) protein is Peptidyl-prolyl cis-trans isomerase.